The following is a 549-amino-acid chain: Cation/acetate symporter ActP (549 aa).

13 consecutive transmembrane segments (helical) span residues 33 to 53 (WQAI…TYWA), 77 to 97 (LAIA…ALVF), 103 to 123 (GLIY…LIAE), 148 to 168 (ILSA…QMVG), 183 to 203 (IAVV…GMLA), 206 to 226 (WVQI…AFMV), 262 to 282 (ISAL…PHIL), 303 to 323 (GFMG…IMLV), 355 to 375 (LFLG…VAGL), 404 to 424 (VSKI…VLFE), 428 to 448 (IAFM…PIIL), 464 to 484 (GGWL…TIWV), and 493 to 513 (IFPY…GIWF).

The protein belongs to the sodium:solute symporter (SSF) (TC 2.A.21) family.

Its subcellular location is the cell inner membrane. In terms of biological role, transports acetate. In Escherichia fergusonii (strain ATCC 35469 / DSM 13698 / CCUG 18766 / IAM 14443 / JCM 21226 / LMG 7866 / NBRC 102419 / NCTC 12128 / CDC 0568-73), this protein is Cation/acetate symporter ActP.